A 776-amino-acid polypeptide reads, in one-letter code: Methionine--tRNA ligase (776 aa).

A 'HIGH' region motif is present at residues 10-20 (PYSNGPIHLGH). Cys-143, Cys-146, Cys-156, and Cys-159 together coordinate Zn(2+). Residues 375–379 (KFSKS) carry the 'KMSKS' region motif. An ATP-binding site is contributed by Lys-378. In terms of domain architecture, tRNA-binding spans 676-776 (DFAKLDMRVG…KPISLGSKVR (101 aa)).

The protein belongs to the class-I aminoacyl-tRNA synthetase family. MetG type 1 subfamily. In terms of assembly, homodimer. Zn(2+) is required as a cofactor.

It is found in the cytoplasm. It carries out the reaction tRNA(Met) + L-methionine + ATP = L-methionyl-tRNA(Met) + AMP + diphosphate. In terms of biological role, is required not only for elongation of protein synthesis but also for the initiation of all mRNA translation through initiator tRNA(fMet) aminoacylation. The chain is Methionine--tRNA ligase (metG) from Nanoarchaeum equitans (strain Kin4-M).